The chain runs to 353 residues: 26S proteasome non-ATPase regulatory subunit 8 (353 aa).

The interval 1-25 is disordered; that stretch reads MFIKGRAAKTPRGEPRRSSRGGRKL. In terms of domain architecture, PCI spans 165–334; sequence PSFERYMAQL…QQKPEDSTIP (170 aa). A Glycyl lysine isopeptide (Lys-Gly) (interchain with G-Cter in SUMO2) cross-link involves residue Lys-300.

Belongs to the proteasome subunit S14 family. As to quaternary structure, component of the 19S proteasome regulatory particle complex. The 26S proteasome consists of a 20S core particle (CP) and two 19S regulatory subunits (RP). The regulatory particle is made of a lid composed of 9 subunits including PSMD8, a base containing 6 ATPases and few additional components. Interacts with DDI2. Interacts with TASOR. In terms of tissue distribution, expressed in the Sertoli cells of the testis.

In terms of biological role, component of the 26S proteasome, a multiprotein complex involved in the ATP-dependent degradation of ubiquitinated proteins. This complex plays a key role in the maintenance of protein homeostasis by removing misfolded or damaged proteins, which could impair cellular functions, and by removing proteins whose functions are no longer required. Therefore, the proteasome participates in numerous cellular processes, including cell cycle progression, apoptosis, or DNA damage repair. The sequence is that of 26S proteasome non-ATPase regulatory subunit 8 (Psmd8) from Mus musculus (Mouse).